A 235-amino-acid chain; its full sequence is uncharacterized protein (235 aa).

Positions 1–98 (MDTKLSVTGA…NKKNTLHYSK (98 aa)) are disordered. Residues Lys-16 and Lys-35 each participate in a glycyl lysine isopeptide (Lys-Gly) (interchain with G-Cter in ubiquitin) cross-link. Basic residues predominate over residues 38–50 (NGNKKRNKNRNRN). Residues 51-60 (KKTETKEQNE) show a composition bias toward basic and acidic residues.

This is an uncharacterized protein from Saccharomyces cerevisiae (strain ATCC 204508 / S288c) (Baker's yeast).